The following is a 221-amino-acid chain: Ribosomal RNA small subunit methyltransferase G (221 aa).

S-adenosyl-L-methionine contacts are provided by residues glycine 89, leucine 94, 140–141 (VE), and arginine 154.

The protein belongs to the methyltransferase superfamily. RNA methyltransferase RsmG family.

The protein resides in the cytoplasm. The enzyme catalyses guanosine(527) in 16S rRNA + S-adenosyl-L-methionine = N(7)-methylguanosine(527) in 16S rRNA + S-adenosyl-L-homocysteine. Specifically methylates the N7 position of guanine in position 527 of 16S rRNA. The protein is Ribosomal RNA small subunit methyltransferase G of Methylibium petroleiphilum (strain ATCC BAA-1232 / LMG 22953 / PM1).